Here is a 486-residue protein sequence, read N- to C-terminus: UDP-N-acetylmuramate--L-alanine ligase (486 aa).

129-135 contacts ATP; the sequence is GTHGKTT.

Belongs to the MurCDEF family.

The protein localises to the cytoplasm. It catalyses the reaction UDP-N-acetyl-alpha-D-muramate + L-alanine + ATP = UDP-N-acetyl-alpha-D-muramoyl-L-alanine + ADP + phosphate + H(+). It functions in the pathway cell wall biogenesis; peptidoglycan biosynthesis. Its function is as follows. Cell wall formation. In Vibrio vulnificus (strain CMCP6), this protein is UDP-N-acetylmuramate--L-alanine ligase.